The following is a 363-amino-acid chain: Anthranilate phosphoribosyltransferase (363 aa).

5-phospho-alpha-D-ribose 1-diphosphate-binding positions include glycine 85, 88–89, threonine 93, 95–98, 113–121, and alanine 125; these read GD, NVST, and KHGNRALSS. Residue glycine 85 coordinates anthranilate. Serine 97 serves as a coordination point for Mg(2+). Asparagine 116 contributes to the anthranilate binding site. Arginine 171 lines the anthranilate pocket. Mg(2+) contacts are provided by aspartate 233 and glutamate 234.

The protein belongs to the anthranilate phosphoribosyltransferase family. In terms of assembly, homodimer. Mg(2+) is required as a cofactor.

The enzyme catalyses N-(5-phospho-beta-D-ribosyl)anthranilate + diphosphate = 5-phospho-alpha-D-ribose 1-diphosphate + anthranilate. Its pathway is amino-acid biosynthesis; L-tryptophan biosynthesis; L-tryptophan from chorismate: step 2/5. Catalyzes the transfer of the phosphoribosyl group of 5-phosphorylribose-1-pyrophosphate (PRPP) to anthranilate to yield N-(5'-phosphoribosyl)-anthranilate (PRA). This chain is Anthranilate phosphoribosyltransferase, found in Gluconobacter oxydans (strain 621H) (Gluconobacter suboxydans).